Consider the following 373-residue polypeptide: Glutamate 5-kinase (373 aa).

Lys-12 contacts ATP. Substrate-binding residues include Ser-52, Asp-139, and Asn-154. 216–222 lines the ATP pocket; it reads TGGMVTK. Residues 281–359 form the PUA domain; it reads RGNICIDDGA…DEINTVLAGN (79 aa).

It belongs to the glutamate 5-kinase family.

The protein localises to the cytoplasm. It catalyses the reaction L-glutamate + ATP = L-glutamyl 5-phosphate + ADP. It functions in the pathway amino-acid biosynthesis; L-proline biosynthesis; L-glutamate 5-semialdehyde from L-glutamate: step 1/2. Its function is as follows. Catalyzes the transfer of a phosphate group to glutamate to form L-glutamate 5-phosphate. The sequence is that of Glutamate 5-kinase from Dehalococcoides mccartyi (strain ATCC BAA-2266 / KCTC 15142 / 195) (Dehalococcoides ethenogenes (strain 195)).